Consider the following 628-residue polypeptide: Modular serine protease (628 aa).

Positions 1 to 25 (MQLISFLSNPLFFCALLLKFRTIFA) are cleaved as a signal peptide. LDL-receptor class A domains lie at 26 to 64 (ACDS…LTCV), 69 to 107 (HCTK…LRCG), 122 to 163 (NCKE…ELCG), and 166 to 204 (ECPA…LLCN). Intrachain disulfides connect cysteine 27-cysteine 39, cysteine 34-cysteine 52, cysteine 46-cysteine 63, cysteine 70-cysteine 82, cysteine 77-cysteine 95, cysteine 89-cysteine 106, cysteine 123-cysteine 135, cysteine 130-cysteine 149, cysteine 143-cysteine 162, cysteine 167-cysteine 179, cysteine 174-cysteine 192, and cysteine 186-cysteine 203. N-linked (GlcNAc...) asparagine glycosylation occurs at asparagine 36. Asparagine 204 carries N-linked (GlcNAc...) asparagine glycosylation. 2 Sushi domains span residues 222–285 (LGCP…KCVK) and 300–356 (ALCT…RCEQ). Intrachain disulfides connect cysteine 224–cysteine 270, cysteine 256–cysteine 283, cysteine 302–cysteine 341, and cysteine 326–cysteine 354. Positions 369–621 (SSGGYTINNT…FEDMILNAMN (253 aa)) constitute a Peptidase S1 domain. A glycan (N-linked (GlcNAc...) asparagine) is linked at asparagine 376. A disulfide bond links cysteine 399 and cysteine 415. Residues histidine 414, aspartate 472, and serine 563 each act as charge relay system in the active site. Asparagine 621 carries N-linked (GlcNAc...) asparagine glycosylation.

Belongs to the peptidase S1 family. May be proteolytically cleaved via an autocatalytic mechanism.

The protein resides in the secreted. Serine protease that plays a key role in innate immunity by activating the Toll pathway in response to infection with Gram-positive bacteria and fungi. During Gram-positive infection, acts downstream of PGRP-SA and upstream of Grass and Spz, and therefore appears to function in a pathway that links detection of Gram-positive lysine-type peptidoglycans to Toll activation. Functions in a separate pathway to the psh-mediated activation of the Toll pathway. The sequence is that of Modular serine protease from Drosophila melanogaster (Fruit fly).